Reading from the N-terminus, the 236-residue chain is Large ribosomal subunit protein uL3 (236 aa).

The segment at 215–236 is disordered; it reads PAPEPAAPVAAAAAGTGEEASA. Positions 221–236 are enriched in low complexity; the sequence is APVAAAAAGTGEEASA.

This sequence belongs to the universal ribosomal protein uL3 family. Part of the 50S ribosomal subunit. Forms a cluster with proteins L14 and L19.

Its function is as follows. One of the primary rRNA binding proteins, it binds directly near the 3'-end of the 23S rRNA, where it nucleates assembly of the 50S subunit. This is Large ribosomal subunit protein uL3 from Parafrankia sp. (strain EAN1pec).